Here is a 1217-residue protein sequence, read N- to C-terminus: Rho family-interacting cell polarization regulator 1 (1217 aa).

Residue serine 22 is modified to Phosphoserine. Residues arginine 83–leucine 112 are a coiled coil. Phosphoserine occurs at positions 345 and 347. Threonine 351 is modified (phosphothreonine). Positions asparagine 371–glutamine 413 are disordered. 2 stretches are compositionally biased toward low complexity: residues serine 376 to serine 391 and proline 400 to glutamine 413. A phosphoserine mark is found at serine 452 and serine 455. The interval threonine 565–glutamine 762 is disordered. Residues proline 579 to glutamine 594 are compositionally biased toward polar residues. Low complexity predominate over residues threonine 595–threonine 649. A compositionally biased stretch (polar residues) spans glutamine 650–alanine 661. The segment covering proline 664–serine 695 has biased composition (low complexity). The span at alanine 720 to serine 729 shows a compositional bias: polar residues. Serine 742 carries the phosphoserine modification. Positions arginine 786–glycine 828 form a coiled coil. Residues phenylalanine 850–alanine 874 are disordered. Residues asparagine 852 to serine 861 show a composition bias toward acidic residues. Phosphoserine is present on residues serine 868 and serine 869.

It belongs to the RIPOR family. As to quaternary structure, interacts (via N-terminus) with RHOA (GTP-bound form); this interaction links active RHOA to STK24 and STK26 kinases. Interacts with RHOB. Interacts with RHOC. Interacts (via C-terminus) with PDCD10; this interaction occurs in a Rho-independent manner. Interacts (via C-terminus) with STK24; this interaction occurs in a PDCD10-dependent and Rho-independent manner. Interacts (via C-terminus) with STK26; this interaction occurs in a PDCD10-dependent and Rho-independent manner. Interacts (via N-terminus) with 14-3-3 proteins; these interactions occur in a Rho-dependent manner.

The protein resides in the cytoplasm. The protein localises to the golgi apparatus. Its function is as follows. Downstream effector protein for Rho-type small GTPases that plays a role in cell polarity and directional migration. Acts as an adapter protein, linking active Rho proteins to STK24 and STK26 kinases, and hence positively regulates Golgi reorientation in polarized cell migration upon Rho activation. Involved in the subcellular relocation of STK26 from the Golgi to cytoplasm punctae in a Rho- and PDCD10-dependent manner upon serum stimulation. This is Rho family-interacting cell polarization regulator 1 from Rattus norvegicus (Rat).